The primary structure comprises 126 residues: Fumarate reductase subunit C (126 aa).

Helical transmembrane passes span 30-50 (IFVA…GAGG), 64-84 (VVVV…VTWF), and 105-125 (VLAG…WMVL).

This sequence belongs to the FrdC family. Part of an enzyme complex containing four subunits: a flavoprotein (FrdA), an iron-sulfur protein (FrdB), and two hydrophobic anchor proteins (FrdC and FrdD).

The protein resides in the cell membrane. In terms of biological role, anchors the catalytic components of the fumarate reductase complex to the cell membrane, binds quinones. This Mycobacterium tuberculosis (strain CDC 1551 / Oshkosh) protein is Fumarate reductase subunit C.